Here is a 638-residue protein sequence, read N- to C-terminus: Bromodomain-containing factor 2 (638 aa).

The segment covering 1-10 (MSRTNMDTRH) has biased composition (basic and acidic residues). The interval 1–54 (MSRTNMDTRHAHSALLAAPQSATANSRSSNSSSESSSNKNNINVGVGDDSGNVS) is disordered. Over residues 25–43 (NSRSSNSSSESSSNKNNIN) the composition is skewed to low complexity. Residues 130-239 (EAEELPPHQS…KYFEKKLSAM (110 aa)) form the Bromo 1 domain. The disordered stretch occupies residues 250–306 (KKTSRNRKKNEDMDSPLVIRRSVSTTNDNIGESGNREGVSGGRPKRTIHPPKSKDLF). At Ser264 the chain carries Phosphoserine. Over residues 271 to 281 (SVSTTNDNIGE) the composition is skewed to polar residues. The 110-residue stretch at 317–426 (KTLQKKFRTC…ELFNFHWLEN (110 aa)) folds into the Bromo 2 domain. A disordered region spans residues 435–460 (TDSDLEEDNYSSSYSSDDEYDDEDIN). Positions 450 to 460 (SDDEYDDEDIN) are enriched in acidic residues. The stretch at 468-537 (AIQYLEQKLK…INELSDLEMN (70 aa)) forms a coiled coil. In terms of domain architecture, NET spans 506–590 (TLLRRKAMKH…EKKNNNNSKR (85 aa)). Residues 586-638 (NNSKRKLSGNYSTAPTNKKKKTLKFLEKDEIINNNNYSDSEEDSSDSSDSDSD) are disordered. Positions 624–638 (DSEEDSSDSSDSDSD) are enriched in acidic residues.

It belongs to the BET family. Interacts with the TFIID subunit TAF7 and with histone H4. In terms of processing, phosphorylated by the casein kinase CK2 complex.

It localises to the cytoplasm. It is found in the nucleus. Functionally, transcription factor involved in the expression of a broad class of genes including snRNAs. Required for sporulation and DNA-damage repair. Prevents the spreading of SIR silencing at telomeres and protects histone H4, but not H3, from deacetylation. This is Bromodomain-containing factor 2 (BDF2) from Saccharomyces cerevisiae (strain ATCC 204508 / S288c) (Baker's yeast).